The following is a 397-amino-acid chain: Pectate lyase (397 aa).

The signal sequence occupies residues M1–A25. Residue N134 is glycosylated (N-linked (GlcNAc...) asparagine). Ca(2+) is bound by residues D191, D216, and D220. The N-linked (GlcNAc...) asparagine glycan is linked to N227. R272 is a catalytic residue.

Belongs to the polysaccharide lyase 1 family. Ca(2+) serves as cofactor.

The enzyme catalyses Eliminative cleavage of (1-&gt;4)-alpha-D-galacturonan to give oligosaccharides with 4-deoxy-alpha-D-galact-4-enuronosyl groups at their non-reducing ends.. It participates in glycan metabolism; pectin degradation; 2-dehydro-3-deoxy-D-gluconate from pectin: step 2/5. The protein is Pectate lyase of Nicotiana tabacum (Common tobacco).